We begin with the raw amino-acid sequence, 165 residues long: 3-isopropylmalate dehydratase small subunit (165 aa).

This sequence belongs to the LeuD family. LeuD type 2 subfamily. In terms of assembly, heterodimer of LeuC and LeuD.

The catalysed reaction is (2R,3S)-3-isopropylmalate = (2S)-2-isopropylmalate. It functions in the pathway amino-acid biosynthesis; L-leucine biosynthesis; L-leucine from 3-methyl-2-oxobutanoate: step 2/4. In terms of biological role, catalyzes the isomerization between 2-isopropylmalate and 3-isopropylmalate, via the formation of 2-isopropylmaleate. The sequence is that of 3-isopropylmalate dehydratase small subunit from Hydrogenobaculum sp. (strain Y04AAS1).